Reading from the N-terminus, the 198-residue chain is MKIGVVAYQGSFEEHALSVKRVFDKIGKGEVIPVKRAKDLDVDGIIIPGGESTTIGQVALRLGLLDPLKEKISQGIPVLGTCAGAIMLSKEVTDAKVGKKSQPLIGVMDASVIRNYYGRQRESFEATVDLEEIEGGKERFVFIRAPAISKVWGKARALATLNDVIVMAQEDQILTTTFHPELSGTTSIHEYFLRMVKR.

Gly50–Ser52 is an L-glutamine binding site. The Nucleophile role is filled by Cys82. L-glutamine-binding positions include Arg114 and Ile143–Arg144. Catalysis depends on charge relay system residues His179 and Glu181.

It belongs to the glutaminase PdxT/SNO family. In the presence of PdxS, forms a dodecamer of heterodimers. Only shows activity in the heterodimer.

It catalyses the reaction aldehydo-D-ribose 5-phosphate + D-glyceraldehyde 3-phosphate + L-glutamine = pyridoxal 5'-phosphate + L-glutamate + phosphate + 3 H2O + H(+). The catalysed reaction is L-glutamine + H2O = L-glutamate + NH4(+). The protein operates within cofactor biosynthesis; pyridoxal 5'-phosphate biosynthesis. Catalyzes the hydrolysis of glutamine to glutamate and ammonia as part of the biosynthesis of pyridoxal 5'-phosphate. The resulting ammonia molecule is channeled to the active site of PdxS. The protein is Pyridoxal 5'-phosphate synthase subunit PdxT of Metallosphaera sedula (strain ATCC 51363 / DSM 5348 / JCM 9185 / NBRC 15509 / TH2).